A 98-amino-acid chain; its full sequence is DNA-binding protein Fis (98 aa).

Residues 74 to 93 (QTRAATMLGINRGTLRKKLK) constitute a DNA-binding region (H-T-H motif).

It belongs to the transcriptional regulatory Fis family. Homodimer.

In terms of biological role, activates ribosomal RNA transcription. Plays a direct role in upstream activation of rRNA promoters. The sequence is that of DNA-binding protein Fis from Glaesserella parasuis serovar 5 (strain SH0165) (Haemophilus parasuis).